A 376-amino-acid chain; its full sequence is Chaperone protein DnaJ (376 aa).

Residues 5–72 form the J domain; it reads DFYEVLGVPK…QKRAAYDQYG (68 aa). A CR-type zinc finger spans residues 136–214; that stretch reads GKEAQIRIPS…CHGQGRVKKQ (79 aa). Cysteine 149, cysteine 152, cysteine 166, cysteine 169, cysteine 188, cysteine 191, cysteine 202, and cysteine 205 together coordinate Zn(2+). CXXCXGXG motif repeat units lie at residues 149–156, 166–173, 188–195, and 202–209; these read CETCHGSG, CGTCQGSG, CPHCRGTG, and CTACHGQG. 2 disordered regions span residues 227-246 and 352-376; these read DGMR…GGPP and SLKK…SFFS. Residues 237-246 are compositionally biased toward gly residues; sequence GEPGTNGGPP. Residues 367–376 show a composition bias toward basic and acidic residues; that stretch reads WTDRLKSFFS.

Belongs to the DnaJ family. In terms of assembly, homodimer. It depends on Zn(2+) as a cofactor.

Its subcellular location is the cytoplasm. In terms of biological role, participates actively in the response to hyperosmotic and heat shock by preventing the aggregation of stress-denatured proteins and by disaggregating proteins, also in an autonomous, DnaK-independent fashion. Unfolded proteins bind initially to DnaJ; upon interaction with the DnaJ-bound protein, DnaK hydrolyzes its bound ATP, resulting in the formation of a stable complex. GrpE releases ADP from DnaK; ATP binding to DnaK triggers the release of the substrate protein, thus completing the reaction cycle. Several rounds of ATP-dependent interactions between DnaJ, DnaK and GrpE are required for fully efficient folding. Also involved, together with DnaK and GrpE, in the DNA replication of plasmids through activation of initiation proteins. The polypeptide is Chaperone protein DnaJ (Acidovorax sp. (strain JS42)).